A 332-amino-acid polypeptide reads, in one-letter code: Glyceraldehyde-3-phosphate dehydrogenase 2 (332 aa).

Residues R11–I12, D32, and R77 contribute to the NAD(+) site. D-glyceraldehyde 3-phosphate-binding positions include S148 to T150, T179, T208 to G209, and R231. Residue C149 is the Nucleophile of the active site. Residue Y273 is modified to Phosphotyrosine. A Phosphothreonine modification is found at T274. N313 provides a ligand contact to NAD(+).

It belongs to the glyceraldehyde-3-phosphate dehydrogenase family. In terms of assembly, homotetramer.

The protein resides in the cytoplasm. It carries out the reaction D-glyceraldehyde 3-phosphate + phosphate + NAD(+) = (2R)-3-phospho-glyceroyl phosphate + NADH + H(+). The protein operates within carbohydrate degradation; glycolysis; pyruvate from D-glyceraldehyde 3-phosphate: step 1/5. The protein is Glyceraldehyde-3-phosphate dehydrogenase 2 (Gapdh2) of Drosophila melanogaster (Fruit fly).